A 219-amino-acid chain; its full sequence is Deoxyribose-phosphate aldolase (219 aa).

The active-site Proton donor/acceptor is D92. Residue K154 is the Schiff-base intermediate with acetaldehyde of the active site. The active-site Proton donor/acceptor is K183.

Belongs to the DeoC/FbaB aldolase family. DeoC type 1 subfamily.

Its subcellular location is the cytoplasm. It catalyses the reaction 2-deoxy-D-ribose 5-phosphate = D-glyceraldehyde 3-phosphate + acetaldehyde. It participates in carbohydrate degradation; 2-deoxy-D-ribose 1-phosphate degradation; D-glyceraldehyde 3-phosphate and acetaldehyde from 2-deoxy-alpha-D-ribose 1-phosphate: step 2/2. Its function is as follows. Catalyzes a reversible aldol reaction between acetaldehyde and D-glyceraldehyde 3-phosphate to generate 2-deoxy-D-ribose 5-phosphate. The sequence is that of Deoxyribose-phosphate aldolase from Dictyoglomus turgidum (strain DSM 6724 / Z-1310).